Reading from the N-terminus, the 42-residue chain is uncharacterized protein (42 aa).

Its subcellular location is the plastid. It is found in the chloroplast. This is an uncharacterized protein from Diacronema lutheri (Unicellular marine alga).